A 201-amino-acid polypeptide reads, in one-letter code: Orotate phosphoribosyltransferase (201 aa).

113–121 is a binding site for 5-phospho-alpha-D-ribose 1-diphosphate; that stretch reads EDIITTGKS. Residues T117 and R145 each coordinate orotate.

Belongs to the purine/pyrimidine phosphoribosyltransferase family. PyrE subfamily. In terms of assembly, homodimer. Mg(2+) is required as a cofactor.

It carries out the reaction orotidine 5'-phosphate + diphosphate = orotate + 5-phospho-alpha-D-ribose 1-diphosphate. It functions in the pathway pyrimidine metabolism; UMP biosynthesis via de novo pathway; UMP from orotate: step 1/2. Catalyzes the transfer of a ribosyl phosphate group from 5-phosphoribose 1-diphosphate to orotate, leading to the formation of orotidine monophosphate (OMP). The sequence is that of Orotate phosphoribosyltransferase from Helicobacter pylori (strain G27).